The following is a 156-amino-acid chain: Cellulose synthase operon protein D (156 aa).

The protein operates within glycan metabolism; bacterial cellulose biosynthesis. In terms of biological role, may have a major role in the perfection of crystallization, involved either in the pore structure itself or in the organization of the pores within the linear array of terminal synthesizing complexes (TCs). The protein is Cellulose synthase operon protein D (acsD) of Komagataeibacter xylinus (Gluconacetobacter xylinus).